The chain runs to 246 residues: Ribulose-phosphate 3-epimerase (246 aa).

Substrate is bound at residue Ser-9. Positions 34, 36, and 83 each coordinate a divalent metal cation. Residue Asp-36 is the Proton acceptor of the active site. Substrate is bound by residues His-83, 159–162 (GFGG), 188–190 (DGG), and 210–212 (GTS). Asp-188 is an a divalent metal cation binding site. Asp-188 acts as the Proton donor in catalysis.

Belongs to the ribulose-phosphate 3-epimerase family. It depends on Co(2+) as a cofactor. The cofactor is Fe(2+). Mn(2+) serves as cofactor. Requires Zn(2+) as cofactor.

It catalyses the reaction D-ribulose 5-phosphate = D-xylulose 5-phosphate. It functions in the pathway carbohydrate degradation; pentose phosphate pathway; D-xylulose 5-phosphate from D-ribulose 5-phosphate (non-oxidative stage): step 1/1. Its function is as follows. Catalyzes the reversible epimerization of D-ribulose 5-phosphate to D-xylulose 5-phosphate. This is Ribulose-phosphate 3-epimerase (RPE1) from Candida glabrata (strain ATCC 2001 / BCRC 20586 / JCM 3761 / NBRC 0622 / NRRL Y-65 / CBS 138) (Yeast).